We begin with the raw amino-acid sequence, 241 residues long: Sugar fermentation stimulation protein homolog (241 aa).

The protein belongs to the SfsA family.

In Nostoc punctiforme (strain ATCC 29133 / PCC 73102), this protein is Sugar fermentation stimulation protein homolog.